The following is a 269-amino-acid chain: Chymotrypsin-like elastase family member 2B (269 aa).

The first 16 residues, 1-16, serve as a signal peptide directing secretion; that stretch reads MIRTLLLSTLVAGALS. A propeptide spans 17–28 (activation peptide); that stretch reads CGVSTYAPDMSR. A Peptidase S1 domain is found at 29 to 267; that stretch reads MLGGEEARPN…YNDWINSVIA (239 aa). An intrachain disulfide couples Cys-58 to Cys-74. Catalysis depends on charge relay system residues His-73 and Asp-121. 3 disulfide bridges follow: Cys-155–Cys-222, Cys-186–Cys-202, and Cys-212–Cys-243. Catalysis depends on Ser-216, which acts as the Charge relay system.

The protein belongs to the peptidase S1 family. Elastase subfamily. Pancreas.

Its subcellular location is the secreted. It catalyses the reaction Preferential cleavage: Leu-|-Xaa, Met-|-Xaa and Phe-|-Xaa. Hydrolyzes elastin.. In terms of biological role, acts upon elastin. The sequence is that of Chymotrypsin-like elastase family member 2B (CELA2B) from Homo sapiens (Human).